Consider the following 312-residue polypeptide: Bifunctional pinoresinol-lariciresinol reductase 1 (312 aa).

NADP(+) is bound by residues 10-16 (GGTGYIG), R35, and K44. K136 serves as the catalytic Proton acceptor. R140 is a binding site for NADP(+). Substrate is bound at residue H268.

Belongs to the NmrA-type oxidoreductase family. Isoflavone reductase subfamily. In terms of assembly, dimer. In terms of tissue distribution, expressed in seeds and roots, but not in stems. Detected in leaves.

It catalyses the reaction (-)-lariciresinol + NADP(+) = (-)-pinoresinol + NADPH + H(+). It carries out the reaction (+)-secoisolariciresinol + NADP(+) = (-)-lariciresinol + NADPH + H(+). In terms of biological role, reductase involved in lignan biosynthesis. Catalyzes the enantioselective conversion of (-)-pinoresinol into (-)-lariciresinol and of (-)-lariciresinol into (+)-secoisolariciresinol. Abstracts the 4R-hydride from the NADPH cofactor during catalysis. The polypeptide is Bifunctional pinoresinol-lariciresinol reductase 1 (PLR_Lu1) (Linum usitatissimum (Flax)).